Reading from the N-terminus, the 205-residue chain is Large ribosomal subunit protein uL4 (205 aa).

Positions 43 to 78 (ARAGTKAQKTRSEVAGGGKKPWRQKGTGNARAGTIR) are disordered.

It belongs to the universal ribosomal protein uL4 family. Part of the 50S ribosomal subunit.

In terms of biological role, one of the primary rRNA binding proteins, this protein initially binds near the 5'-end of the 23S rRNA. It is important during the early stages of 50S assembly. It makes multiple contacts with different domains of the 23S rRNA in the assembled 50S subunit and ribosome. Its function is as follows. Forms part of the polypeptide exit tunnel. The sequence is that of Large ribosomal subunit protein uL4 from Halorhodospira halophila (strain DSM 244 / SL1) (Ectothiorhodospira halophila (strain DSM 244 / SL1)).